Reading from the N-terminus, the 421-residue chain is Expansin-like protein DDB_G0293186 (421 aa).

The N-terminal stretch at 1-20 (MRTLKLIILLILSTFKTINS) is a signal peptide. Residue Asn19 is glycosylated (N-linked (GlcNAc...) asparagine). In terms of domain architecture, Expansin-like EG45 spans 43 to 139 (GGQCGLPLPG…QKVSCGFSGY (97 aa)). 2 disulfides stabilise this stretch: Cys46–Cys70 and Cys73–Cys134. Residues Asn117 and Asn391 are each glycosylated (N-linked (GlcNAc...) asparagine).

The protein belongs to the expansin family. Expansin A subfamily.

It localises to the secreted. Its function is as follows. May serve to lubricate the movement of the cellulose microfibrils during cell growth and wall extension and/or may serve to maintain the fluid state of the slug cell wall. This chain is Expansin-like protein DDB_G0293186, found in Dictyostelium discoideum (Social amoeba).